The primary structure comprises 365 residues: Cobalt-precorrin-5B C(1)-methyltransferase (365 aa).

This sequence belongs to the CbiD family.

The catalysed reaction is Co-precorrin-5B + S-adenosyl-L-methionine = Co-precorrin-6A + S-adenosyl-L-homocysteine. The protein operates within cofactor biosynthesis; adenosylcobalamin biosynthesis; cob(II)yrinate a,c-diamide from sirohydrochlorin (anaerobic route): step 6/10. Catalyzes the methylation of C-1 in cobalt-precorrin-5B to form cobalt-precorrin-6A. The chain is Cobalt-precorrin-5B C(1)-methyltransferase from Polaromonas naphthalenivorans (strain CJ2).